The primary structure comprises 423 residues: MLDLRFVRDNVDKIDMMLRNRRMDLSLAPLIELDTQRRRILREVEELKFRRNKASEEISNLKREKKDSSLLIEEMKEVSRRVKTLDQELTVIEEHFRDFLLLIPNMPHESVPVGADEKDNPVAKTWGSKPELDFEPKPHWEIGEALGILDFERAAKIAGARFALYWKMGAALERALIAFMLDIHTKRHGYTEVLPPFIVNSTSLLGTGQLPKFKEDLFKLEDRDFYLVPTAEVPVTNIHMNETLEESELPKLYTAFTPCFRSEAGSYGKDTRGLIRQHQFNKVELVKLVKPESSYEELEKLLLDAERILQELGLHYRVVTLCTGDMGFSSAKTYDIEVWLPGQNTYREISSCSNFEDFQARRANIRFRRKGQSKTEFVHTLNGSGLAVGRTLVAILENGQQADGSVSIPPALRPYLGNIERID.

Residue 230–232 (TAE) coordinates L-serine. An ATP-binding site is contributed by 261 to 263 (RSE). Residue Glu284 coordinates L-serine. 348–351 (EISS) serves as a coordination point for ATP. Position 384 (Ser384) interacts with L-serine.

Belongs to the class-II aminoacyl-tRNA synthetase family. Type-1 seryl-tRNA synthetase subfamily. In terms of assembly, homodimer. The tRNA molecule binds across the dimer.

Its subcellular location is the cytoplasm. The enzyme catalyses tRNA(Ser) + L-serine + ATP = L-seryl-tRNA(Ser) + AMP + diphosphate + H(+). It catalyses the reaction tRNA(Sec) + L-serine + ATP = L-seryl-tRNA(Sec) + AMP + diphosphate + H(+). It participates in aminoacyl-tRNA biosynthesis; selenocysteinyl-tRNA(Sec) biosynthesis; L-seryl-tRNA(Sec) from L-serine and tRNA(Sec): step 1/1. Catalyzes the attachment of serine to tRNA(Ser). Is also able to aminoacylate tRNA(Sec) with serine, to form the misacylated tRNA L-seryl-tRNA(Sec), which will be further converted into selenocysteinyl-tRNA(Sec). This Syntrophobacter fumaroxidans (strain DSM 10017 / MPOB) protein is Serine--tRNA ligase.